Here is a 120-residue protein sequence, read N- to C-terminus: Ribosome-binding factor A (120 aa).

The protein belongs to the RbfA family. As to quaternary structure, monomer. Binds 30S ribosomal subunits, but not 50S ribosomal subunits or 70S ribosomes.

It localises to the cytoplasm. Its function is as follows. One of several proteins that assist in the late maturation steps of the functional core of the 30S ribosomal subunit. Associates with free 30S ribosomal subunits (but not with 30S subunits that are part of 70S ribosomes or polysomes). Required for efficient processing of 16S rRNA. May interact with the 5'-terminal helix region of 16S rRNA. The chain is Ribosome-binding factor A from Borrelia garinii subsp. bavariensis (strain ATCC BAA-2496 / DSM 23469 / PBi) (Borreliella bavariensis).